Here is a 692-residue protein sequence, read N- to C-terminus: MARQFSLENTRNIGIMAHIDAGKTTTTERILFYTGRVHKIGEVHEGAATMDWMEQEQERGITITSAATTAQWKGHRINIIDTPGHVDFTVEVERSLRVLDGAVAVLDAQSGVEPQTETVWRQATTYGVPRIVFVNKMDKIGADFLYSVKTLHERLQANAHPVQLPIGAEDQFTGIIDLVEMCAYHYHDELGKNIERIEIPEDYRDMAEEYRGKLIEAVAELDEELMMKYLEGEEITKEELKAAIRKATVSVQFFPVFCGSAFKNKGVQLMLDGVVDYLPSPVDIPAIKGTVPDTEEETVREARDDAPFAALAFKIMTDPYVGKLTFFRVYSGTLNSGSYVLNSTKRKRERIGRILQMHANHREEIAQVYAGDIAAAVGLKDTTTGDTLCDDKDPVILESMQFPEPVIQIAIEPKSKADQDKMSTALQKLQEEDPTFRAWTDQETGQTIIAGMGELHLDIIVDRMRREFKVEANVGAPQVAYRETFRKSAQVEGKFVRQSGGRGQYGHVWIEFSPNEEGKGFEFENAIVGGVVPREYIPAIQAGLEDAMQNGVLAGYPVVDIKAKLFDGSYHDVDSSEMAFKIAASMALKNAAAKCDPVLLEPIMKVEVIVPEEYLGDIMGDITSRRGRVEGMEARGNAQVVRAMVPLSEMFGYATSLRSNTQGRGTFTMVFDHYEEVPKSIAEEIIKKNKGE.

Residues 8–282 (ENTRNIGIMA…GVVDYLPSPV (275 aa)) form the tr-type G domain. Residues 17 to 24 (AHIDAGKT), 81 to 85 (DTPGH), and 135 to 138 (NKMD) each bind GTP.

Belongs to the TRAFAC class translation factor GTPase superfamily. Classic translation factor GTPase family. EF-G/EF-2 subfamily.

The protein localises to the cytoplasm. In terms of biological role, catalyzes the GTP-dependent ribosomal translocation step during translation elongation. During this step, the ribosome changes from the pre-translocational (PRE) to the post-translocational (POST) state as the newly formed A-site-bound peptidyl-tRNA and P-site-bound deacylated tRNA move to the P and E sites, respectively. Catalyzes the coordinated movement of the two tRNA molecules, the mRNA and conformational changes in the ribosome. The chain is Elongation factor G from Anoxybacillus flavithermus (strain DSM 21510 / WK1).